A 317-amino-acid polypeptide reads, in one-letter code: Protease HtpX homolog (317 aa).

Helical transmembrane passes span 6–26 (TAILLAGLTALFMAVGFAIGG) and 28–48 (GGMMIAFVVASATNLFSYWNS). His-130 lines the Zn(2+) pocket. The active site involves Glu-131. His-134 lines the Zn(2+) pocket. Transmembrane regions (helical) follow at residues 145 to 165 (MTATIAGAISMLANFGLLFGG) and 173 to 193 (PFGAIGTILMVILAPLAAMLV). Glu-202 serves as a coordination point for Zn(2+). The disordered stretch occupies residues 283 to 317 (GGGGFAPGPAPAVRPPGGNPWGVDPGGGQRRGPWG). The span at 290 to 300 (GPAPAVRPPGG) shows a compositional bias: pro residues. Residues 306 to 317 (DPGGGQRRGPWG) are compositionally biased toward gly residues.

This sequence belongs to the peptidase M48B family. Zn(2+) is required as a cofactor.

It is found in the cell inner membrane. The sequence is that of Protease HtpX homolog from Xanthobacter autotrophicus (strain ATCC BAA-1158 / Py2).